A 362-amino-acid polypeptide reads, in one-letter code: UDP-N-acetylglucosamine--N-acetylmuramyl-(pentapeptide) pyrophosphoryl-undecaprenol N-acetylglucosamine transferase (362 aa).

Residues 14–16 (TGG), arginine 170, serine 199, and glutamine 289 contribute to the UDP-N-acetyl-alpha-D-glucosamine site.

The protein belongs to the glycosyltransferase 28 family. MurG subfamily.

Its subcellular location is the cell inner membrane. It catalyses the reaction di-trans,octa-cis-undecaprenyl diphospho-N-acetyl-alpha-D-muramoyl-L-alanyl-D-glutamyl-meso-2,6-diaminopimeloyl-D-alanyl-D-alanine + UDP-N-acetyl-alpha-D-glucosamine = di-trans,octa-cis-undecaprenyl diphospho-[N-acetyl-alpha-D-glucosaminyl-(1-&gt;4)]-N-acetyl-alpha-D-muramoyl-L-alanyl-D-glutamyl-meso-2,6-diaminopimeloyl-D-alanyl-D-alanine + UDP + H(+). It participates in cell wall biogenesis; peptidoglycan biosynthesis. Functionally, cell wall formation. Catalyzes the transfer of a GlcNAc subunit on undecaprenyl-pyrophosphoryl-MurNAc-pentapeptide (lipid intermediate I) to form undecaprenyl-pyrophosphoryl-MurNAc-(pentapeptide)GlcNAc (lipid intermediate II). The chain is UDP-N-acetylglucosamine--N-acetylmuramyl-(pentapeptide) pyrophosphoryl-undecaprenol N-acetylglucosamine transferase from Borrelia turicatae (strain 91E135).